The sequence spans 351 residues: UPF0421 protein BC_2748 (351 aa).

Helical transmembrane passes span 19–39, 74–94, 109–129, and 131–151; these read IAVFLTVLVCDFFNIPTIFAV, FTFFLGHQAISYALAAMFTIV, TLTAVAMIPITANHYFTAFLI, and LATTSTGIIVSTLVNFFIFPP.

This sequence belongs to the UPF0421 family.

Its subcellular location is the cell membrane. The sequence is that of UPF0421 protein BC_2748 from Bacillus cereus (strain ATCC 14579 / DSM 31 / CCUG 7414 / JCM 2152 / NBRC 15305 / NCIMB 9373 / NCTC 2599 / NRRL B-3711).